Here is an 842-residue protein sequence, read N- to C-terminus: Non-motile and phage-resistance protein (842 aa).

The next 3 helical transmembrane spans lie at 29–50 (VFVR…AFGV), 283–303 (GAFS…LLMI), and 343–363 (VYLS…VVSG). Residues 318-389 (SERRFRLAVE…QALANAAMYG (72 aa)) enclose the PAS domain. One can recognise a Histidine kinase domain in the interval 607-830 (NMSHELRTPL…TVSFTLPVRH (224 aa)). Histidine 610 carries the phosphohistidine; by autocatalysis modification.

Its subcellular location is the cell membrane. The enzyme catalyses ATP + protein L-histidine = ADP + protein N-phospho-L-histidine.. Functionally, member of the two-component regulatory system involved in the regulation of polar organelle development. PleC functions as a membrane-associated protein kinase that transfers phosphate to the response regulator PleD, leading to its activation. The chain is Non-motile and phage-resistance protein (pleC) from Caulobacter vibrioides (strain ATCC 19089 / CIP 103742 / CB 15) (Caulobacter crescentus).